A 618-amino-acid polypeptide reads, in one-letter code: MPASLLDTIESPADLRALPAAELPGLAAEVRAFLIDSVAGTGGHLASNLGAVELTLALHYVFDTPRDRIVWDVGHQSYTHKILTGRRDAMQGLRQRGGIAGFPRRAESEFDAFGTGHSSTSISAALGMAEAFHQLGSDQRAVAVIGDGAMTAGMAFEALNNAGATELPLLVVLNDNDMSISPNVGALNNYLARLMSGRFYAAARRAGDKVLSVAPPIRELAKRAEEHMKGMVTPGTLFEEFGFNYIGPIDGHDLDVLVNTLRNIRHLRGPQFLHVVTRKGKGYTPAETNPCLYHGVARFDPAAGVAEKRAGKPSYTEVFGDWLCDMAASDPRLVGITPAMREGSGLVRFSQEFPERYFDVGIAEQHALTFAAGLACEGVKPVVAIYSTFLQRAYDQLIHDIALQNLPVTLAIDRAGLVGADGPTHAGSFDLSFLRCVPDLVIAAPSDENECRRLLSTAFLHDGPAAVRYPRGCGTGAAIEPGLEPVEIGKGVCRRRGRDVALLAFGSLVAPALTAAERLDATVADMRFVKPLDVDLVGELAAGHRLLVTLEENAVAGGAGAAVAELLAQLGIVVPVLQLGLSDVFIEHGDAAAMLAACGLDAPGIERAVSERLAALPE.

Residues His-75 and Gly-116–Ser-118 contribute to the thiamine diphosphate site. Asp-147 serves as a coordination point for Mg(2+). Thiamine diphosphate contacts are provided by residues Gly-148–Ala-149, Asn-176, Tyr-283, and Glu-364. Asn-176 lines the Mg(2+) pocket.

It belongs to the transketolase family. DXPS subfamily. As to quaternary structure, homodimer. It depends on Mg(2+) as a cofactor. The cofactor is thiamine diphosphate.

The catalysed reaction is D-glyceraldehyde 3-phosphate + pyruvate + H(+) = 1-deoxy-D-xylulose 5-phosphate + CO2. It participates in metabolic intermediate biosynthesis; 1-deoxy-D-xylulose 5-phosphate biosynthesis; 1-deoxy-D-xylulose 5-phosphate from D-glyceraldehyde 3-phosphate and pyruvate: step 1/1. In terms of biological role, catalyzes the acyloin condensation reaction between C atoms 2 and 3 of pyruvate and glyceraldehyde 3-phosphate to yield 1-deoxy-D-xylulose-5-phosphate (DXP). This Thiobacillus denitrificans (strain ATCC 25259 / T1) protein is 1-deoxy-D-xylulose-5-phosphate synthase.